A 189-amino-acid chain; its full sequence is Guanylate kinase (189 aa).

A Guanylate kinase-like domain is found at 8–186 (GKLTVITGPS…AVIELESLMG (179 aa)). 15–22 (GPSGVGKG) lines the ATP pocket.

Belongs to the guanylate kinase family.

The protein resides in the cytoplasm. It carries out the reaction GMP + ATP = GDP + ADP. Its function is as follows. Essential for recycling GMP and indirectly, cGMP. The sequence is that of Guanylate kinase from Prochlorococcus marinus (strain MIT 9313).